Here is a 254-residue protein sequence, read N- to C-terminus: Ribosomal RNA small subunit methyltransferase G (254 aa).

Residues Gly84, Phe89, 136-137, and Arg155 each bind S-adenosyl-L-methionine; that span reads VE. The interval 231–254 is disordered; that stretch reads HLYPRAVGIPSKQPLGIQADDNRS.

It belongs to the methyltransferase superfamily. RNA methyltransferase RsmG family.

Its subcellular location is the cytoplasm. Its function is as follows. Specifically methylates the N7 position of a guanine in 16S rRNA. The sequence is that of Ribosomal RNA small subunit methyltransferase G from Synechococcus sp. (strain WH7803).